Reading from the N-terminus, the 556-residue chain is Glucose-6-phosphate isomerase (556 aa).

The active-site Proton donor is the Glu364. Catalysis depends on residues His395 and Lys521.

It belongs to the GPI family.

It is found in the cytoplasm. The enzyme catalyses alpha-D-glucose 6-phosphate = beta-D-fructose 6-phosphate. Its pathway is carbohydrate biosynthesis; gluconeogenesis. The protein operates within carbohydrate degradation; glycolysis; D-glyceraldehyde 3-phosphate and glycerone phosphate from D-glucose: step 2/4. In terms of biological role, catalyzes the reversible isomerization of glucose-6-phosphate to fructose-6-phosphate. The sequence is that of Glucose-6-phosphate isomerase from Corynebacterium kroppenstedtii (strain DSM 44385 / JCM 11950 / CIP 105744 / CCUG 35717).